We begin with the raw amino-acid sequence, 1136 residues long: MAMDISLFFIFLVIYAPLVSYADESQAEIDALTAFKLNLHDPLGALTSWDPSTPAAPCDWRGVGCTNHRVTEIRLPRLQLSGRISDRISGLRMLRKLSLRSNSFNGTIPTSLAYCTRLLSVFLQYNSLSGKLPPAMRNLTSLEVFNVAGNRLSGEIPVGLPSSLQFLDISSNTFSGQIPSGLANLTQLQLLNLSYNQLTGEIPASLGNLQSLQYLWLDFNLLQGTLPSAISNCSSLVHLSASENEIGGVIPAAYGALPKLEVLSLSNNNFSGTVPFSLFCNTSLTIVQLGFNAFSDIVRPETTANCRTGLQVLDLQENRISGRFPLWLTNILSLKNLDVSGNLFSGEIPPDIGNLKRLEELKLANNSLTGEIPVEIKQCGSLDVLDFEGNSLKGQIPEFLGYMKALKVLSLGRNSFSGYVPSSMVNLQQLERLNLGENNLNGSFPVELMALTSLSELDLSGNRFSGAVPVSISNLSNLSFLNLSGNGFSGEIPASVGNLFKLTALDLSKQNMSGEVPVELSGLPNVQVIALQGNNFSGVVPEGFSSLVSLRYVNLSSNSFSGEIPQTFGFLRLLVSLSLSDNHISGSIPPEIGNCSALEVLELRSNRLMGHIPADLSRLPRLKVLDLGQNNLSGEIPPEISQSSSLNSLSLDHNHLSGVIPGSFSGLSNLTKMDLSVNNLTGEIPASLALISSNLVYFNVSSNNLKGEIPASLGSRINNTSEFSGNTELCGKPLNRRCESSTAEGKKKKRKMILMIVMAAIGAFLLSLFCCFYVYTLLKWRKKLKQQSTTGEKKRSPGRTSAGSRVRSSTSRSSTENGEPKLVMFNNKITLAETIEATRQFDEENVLSRTRYGLLFKANYNDGMVLSIRRLPNGSLLNENLFKKEAEVLGKVKHRNITVLRGYYAGPPDLRLLVYDYMPNGNLSTLLQEASHQDGHVLNWPMRHLIALGIARGLGFLHQSNMVHGDIKPQNVLFDADFEAHISDFGLDRLTIRSPSRSAVTANTIGTLGYVSPEATLSGEITRESDIYSFGIVLLEILTGKRPVMFTQDEDIVKWVKKQLQRGQVTELLEPGLLELDPESSEWEEFLLGIKVGLLCTATDPLDRPTMSDVVFMLEGCRVGPDVPSSADPTSQPSPA.

The signal sequence occupies residues 1–22 (MAMDISLFFIFLVIYAPLVSYA). At 23-751 (DESQAEIDAL…TAEGKKKKRK (729 aa)) the chain is on the extracellular side. LRR repeat units lie at residues 93–115 (MLRKLSLRSNSFNGTIPTSLAYC), 117–139 (RLLSVFLQYNSLSGKLPPAMRNL), 141–162 (SLEVFNVAGNRLSGEIPVGLPS), 163–186 (SLQFLDISSNTFSGQIPSGLANLT), 187–210 (QLQLLNLSYNQLTGEIPASLGNLQ), 211–233 (SLQYLWLDFNLLQGTLPSAISNC), 235–256 (SLVHLSASENEIGGVIPAAYGA), and 259–280 (KLEVLSLSNNNFSGTVPFSLFC). N-linked (GlcNAc...) asparagine glycans are attached at residues Asn-105 and Asn-138. 3 N-linked (GlcNAc...) asparagine glycosylation sites follow: Asn-184, Asn-192, and Asn-232. Asn-269 and Asn-281 each carry an N-linked (GlcNAc...) asparagine glycan. 18 LRR repeats span residues 283–304 (SLTIVQLGFNAFSDIVRPETTA), 309–330 (GLQVLDLQENRISGRFPLWLTN), 333–355 (SLKNLDVSGNLFSGEIPPDIGNL), 357–379 (RLEELKLANNSLTGEIPVEIKQC), 381–403 (SLDVLDFEGNSLKGQIPEFLGYM), 405–426 (ALKVLSLGRNSFSGYVPSSMVN), 429–452 (QLERLNLGENNLNGSFPVELMALT), 453–479 (SLSELDLSGNRFSGAVPVSISNLSNLS), 480–500 (FLNLSGNGFSGEIPASVGNLF), 501–524 (KLTALDLSKQNMSGEVPVELSGLP), 525–546 (NVQVIALQGNNFSGVVPEGFSS), 549–571 (SLRYVNLSSNSFSGEIPQTFGFL), 573–595 (LLVSLSLSDNHISGSIPPEIGNC), 597–620 (ALEVLELRSNRLMGHIPADLSRLP), 621–643 (RLKVLDLGQNNLSGEIPPEISQS), 645–666 (SLNSLSLDHNHLSGVIPGSFSG), 669–691 (NLTKMDLSVNNLTGEIPASLALI), and 694–716 (NLVYFNVSSNNLKGEIPASLGSR). Asn-365 is a glycosylation site (N-linked (GlcNAc...) asparagine). N-linked (GlcNAc...) asparagine glycosylation is found at Asn-441, Asn-474, Asn-477, Asn-482, Asn-511, Asn-535, Asn-554, and Asn-594. A glycan (N-linked (GlcNAc...) asparagine) is linked at Asn-631. 4 N-linked (GlcNAc...) asparagine glycosylation sites follow: Asn-669, Asn-679, Asn-699, and Asn-719. The helical transmembrane segment at 752-772 (MILMIVMAAIGAFLLSLFCCF) threads the bilayer. The Cytoplasmic portion of the chain corresponds to 773 to 1136 (YVYTLLKWRK…ADPTSQPSPA (364 aa)). The interval 786–819 (QQSTTGEKKRSPGRTSAGSRVRSSTSRSSTENGE) is disordered. Over residues 799-815 (RTSAGSRVRSSTSRSST) the composition is skewed to low complexity. 2 positions are modified to phosphothreonine: Thr-830 and Thr-838. Positions 841–1123 (FDEENVLSRT…LEGCRVGPDV (283 aa)) constitute a Protein kinase domain. 2 positions are modified to phosphotyrosine: Tyr-915 and Tyr-1010.

It belongs to the protein kinase superfamily. Ser/Thr protein kinase family.

It localises to the cell membrane. It carries out the reaction L-seryl-[protein] + ATP = O-phospho-L-seryl-[protein] + ADP + H(+). It catalyses the reaction L-threonyl-[protein] + ATP = O-phospho-L-threonyl-[protein] + ADP + H(+). The sequence is that of Probable LRR receptor-like serine/threonine-protein kinase At4g36180 from Arabidopsis thaliana (Mouse-ear cress).